Consider the following 445-residue polypeptide: Ubiquitin carboxyl-terminal hydrolase MINDY-3 (445 aa).

Cysteine 51 functions as the Nucleophile in the catalytic mechanism. Serine 125 carries the phosphoserine modification. Histidine 287 serves as the catalytic Proton acceptor.

It belongs to the MINDY deubiquitinase family. FAM188 subfamily. Interacts with COPS5. In terms of tissue distribution, widely expressed with high levels in heart, skeletal muscle, and kidney, and low levels in liver and brain. Also expressed in lung (at protein level).

It is found in the nucleus. The enzyme catalyses Thiol-dependent hydrolysis of ester, thioester, amide, peptide and isopeptide bonds formed by the C-terminal Gly of ubiquitin (a 76-residue protein attached to proteins as an intracellular targeting signal).. Hydrolase that can remove 'Lys-48'-linked conjugated ubiquitin from proteins. The chain is Ubiquitin carboxyl-terminal hydrolase MINDY-3 from Homo sapiens (Human).